The sequence spans 205 residues: Mitotic spindle assembly checkpoint protein MAD2A (205 aa).

The residue at position 2 (Ala2) is an N-acetylalanine. 6 positions are modified to phosphoserine: Ser6, Ser130, Ser170, Ser178, Ser185, and Ser195. One can recognise an HORMA domain in the interval 14-197 (RGSAEIVAEF…TTIHKVNSMV (184 aa)). The required for assuming the closed conformation and for interaction with CDC20 stretch occupies residues 195 to 205 (SMVAYKIPVND).

Belongs to the MAD2 family. In terms of assembly, monomer and homodimer. Heterodimerizes with MAD2L1 in order to form a tetrameric MAD1L1-MAD2L1 core complex. In the closed and open conformation, interacts with MAD1L1. Formation of a heterotetrameric core complex containing two molecules each of MAD1L1 and of MAD2L1 promotes binding of another molecule of MAD2L1 to each MAD2L1, resulting in a heterohexamer. Interacts with MAD2L1BP. Interacts with ADAM17/TACE. Interacts with CDC20. Dimeric MAD2L1 in the closed conformation interacts with CDC20. Monomeric MAD2L1 in the open conformation does not interact with CDC20. CDC20 competes with MAD1L1 for MAD2L1 binding. In the closed conformation, interacts with BUB1B. Interacts with TTK. Interacts with TPR. Binds to UBD (via ubiquitin-like 1 domain) during mitosis. Interacts with isoform 1 and isoform 2 of NEK2. Interacts with HSF1; this interaction occurs in mitosis. Interacts with isoform 3 of MAD1L1; this interaction leads to the cytoplasmic sequestration of MAD2L1. In terms of processing, phosphorylated on multiple serine residues. The level of phosphorylation varies during the cell cycle and is highest during mitosis. Phosphorylation abolishes interaction with MAD1L1 and reduces interaction with CDC20. Phosphorylated by NEK2.

The protein resides in the nucleus. It localises to the chromosome. Its subcellular location is the centromere. It is found in the kinetochore. The protein localises to the cytoplasm. The protein resides in the cytoskeleton. It localises to the spindle pole. Component of the spindle-assembly checkpoint that prevents the onset of anaphase until all chromosomes are properly aligned at the metaphase plate. In the closed conformation (C-MAD2) forms a heterotetrameric complex with MAD1L1 at unattached kinetochores during prometaphase, the complex recruits open conformation molecules of MAD2L1 (O-MAD2) and then promotes the conversion of O-MAD2 to C-MAD2. Required for the execution of the mitotic checkpoint which monitors the process of kinetochore-spindle attachment and inhibits the activity of the anaphase promoting complex by sequestering CDC20 until all chromosomes are aligned at the metaphase plate. This chain is Mitotic spindle assembly checkpoint protein MAD2A (MAD2L1), found in Homo sapiens (Human).